We begin with the raw amino-acid sequence, 198 residues long: NAD(P)H dehydrogenase (quinone) (198 aa).

A Flavodoxin-like domain is found at 4-189 (ILVLYYSMYG…SIARYQGEYV (186 aa)). FMN-binding positions include 10-15 (SMYGHI) and 78-80 (TRF). Tyr12 lines the NAD(+) pocket. Residue Trp98 coordinates substrate. FMN contacts are provided by residues 113 to 118 (STGTGG) and His133.

The protein belongs to the WrbA family. The cofactor is FMN.

The enzyme catalyses a quinone + NADH + H(+) = a quinol + NAD(+). It catalyses the reaction a quinone + NADPH + H(+) = a quinol + NADP(+). The sequence is that of NAD(P)H dehydrogenase (quinone) from Salmonella paratyphi A (strain ATCC 9150 / SARB42).